The primary structure comprises 859 residues: Rod cGMP-specific 3',5'-cyclic phosphodiesterase subunit alpha (859 aa).

At G2 the chain carries N-acetylglycine. GAF domains are found at residues Q73–M222 and D254–V431. The 334-residue stretch at E483 to Y816 folds into the PDEase domain. H559 (proton donor) is an active-site residue. Residues H563, H599, D600, and D720 each contribute to the a divalent metal cation site. Residues K821–Q859 form a disordered region. The span at Q830–S840 shows a compositional bias: low complexity. A compositionally biased stretch (gly residues) spans Q841–P851. C856 carries the cysteine methyl ester modification. C856 carries the S-farnesyl cysteine lipid modification. Residues C857 to Q859 constitute a propeptide, removed in mature form.

The protein belongs to the cyclic nucleotide phosphodiesterase family. Oligomer composed of two catalytic chains (alpha and beta), an inhibitory chain (gamma) and the delta chain. A divalent metal cation is required as a cofactor.

It is found in the cell membrane. The protein resides in the cell projection. Its subcellular location is the cilium. The protein localises to the photoreceptor outer segment. It catalyses the reaction 3',5'-cyclic GMP + H2O = GMP + H(+). In terms of biological role, rod-specific cGMP phosphodiesterase that catalyzes the hydrolysis of 3',5'-cyclic GMP. This protein participates in processes of transmission and amplification of the visual signal. In Bos taurus (Bovine), this protein is Rod cGMP-specific 3',5'-cyclic phosphodiesterase subunit alpha.